The following is a 208-amino-acid chain: Uracil phosphoribosyltransferase (208 aa).

Residues arginine 78, arginine 103, and 130 to 138 each bind 5-phospho-alpha-D-ribose 1-diphosphate; that span reads DPMLATGGS. Uracil contacts are provided by residues isoleucine 193 and 198 to 200; that span reads GDA. Aspartate 199 contributes to the 5-phospho-alpha-D-ribose 1-diphosphate binding site.

The protein belongs to the UPRTase family. It depends on Mg(2+) as a cofactor.

It carries out the reaction UMP + diphosphate = 5-phospho-alpha-D-ribose 1-diphosphate + uracil. The protein operates within pyrimidine metabolism; UMP biosynthesis via salvage pathway; UMP from uracil: step 1/1. Allosterically activated by GTP. In terms of biological role, catalyzes the conversion of uracil and 5-phospho-alpha-D-ribose 1-diphosphate (PRPP) to UMP and diphosphate. This Shewanella frigidimarina (strain NCIMB 400) protein is Uracil phosphoribosyltransferase.